Reading from the N-terminus, the 420-residue chain is ATP-dependent Clp protease ATP-binding subunit ClpX (420 aa).

The region spanning 3–57 is the ClpX-type ZB domain; it reads KKTPGTNGKQKLFCSFCGKEQDAVKRLVAGPGVYICDECISLCNEIIAEDHEHSH. Zn(2+) contacts are provided by Cys-16, Cys-19, Cys-38, and Cys-41. 122–129 contributes to the ATP binding site; it reads PTGSGKTL.

This sequence belongs to the ClpX chaperone family. In terms of assembly, component of the ClpX-ClpP complex. Forms a hexameric ring that, in the presence of ATP, binds to fourteen ClpP subunits assembled into a disk-like structure with a central cavity, resembling the structure of eukaryotic proteasomes.

ATP-dependent specificity component of the Clp protease. It directs the protease to specific substrates. Can perform chaperone functions in the absence of ClpP. The sequence is that of ATP-dependent Clp protease ATP-binding subunit ClpX from Leptospira borgpetersenii serovar Hardjo-bovis (strain L550).